A 382-amino-acid chain; its full sequence is Mannitol-1-phosphate 5-dehydrogenase (382 aa).

NAD(+) is bound at residue 3 to 14 (ALHFGAGNIGRG).

The protein belongs to the mannitol dehydrogenase family.

It carries out the reaction D-mannitol 1-phosphate + NAD(+) = beta-D-fructose 6-phosphate + NADH + H(+). This is Mannitol-1-phosphate 5-dehydrogenase from Klebsiella pneumoniae (strain 342).